We begin with the raw amino-acid sequence, 320 residues long: GTPase Era (320 aa).

In terms of domain architecture, Era-type G spans 25–193 (HCGFIAIVGR…RKHVRDHLPK (169 aa)). The tract at residues 33–40 (GRPNVGKS) is G1. 33–40 (GRPNVGKS) contacts GTP. Residues 59–63 (QTTRH) are G2. Residues 80–83 (DTPG) are G3. GTP is bound by residues 80–84 (DTPGL) and 142–145 (NKVD). The G4 stretch occupies residues 142–145 (NKVD). The segment at 172–174 (ISA) is G5. In terms of domain architecture, KH type-2 spans 216–302 (VREKLMRFTG…YLETWVKVKS (87 aa)).

This sequence belongs to the TRAFAC class TrmE-Era-EngA-EngB-Septin-like GTPase superfamily. Era GTPase family. Monomer.

It is found in the cytoplasm. The protein resides in the cell inner membrane. Its function is as follows. An essential GTPase that binds both GDP and GTP, with rapid nucleotide exchange. Plays a role in 16S rRNA processing and 30S ribosomal subunit biogenesis and possibly also in cell cycle regulation and energy metabolism. This Vibrio vulnificus (strain CMCP6) protein is GTPase Era.